The chain runs to 118 residues: Large ribosomal subunit protein uL18 (118 aa).

The segment at 1–24 (MISKPDKNKIRQKRHRRVRGKLSG) is disordered. The segment covering 10-20 (IRQKRHRRVRG) has biased composition (basic residues).

This sequence belongs to the universal ribosomal protein uL18 family. In terms of assembly, part of the 50S ribosomal subunit; part of the 5S rRNA/L5/L18/L25 subcomplex. Contacts the 5S and 23S rRNAs.

Its function is as follows. This is one of the proteins that bind and probably mediate the attachment of the 5S RNA into the large ribosomal subunit, where it forms part of the central protuberance. The sequence is that of Large ribosomal subunit protein uL18 from Streptococcus mutans serotype c (strain ATCC 700610 / UA159).